The primary structure comprises 191 residues: Acireductone dioxygenase 2 (191 aa).

Fe(2+)-binding residues include histidine 102, histidine 104, glutamate 108, and histidine 146. Positions 102, 104, 108, and 146 each coordinate Ni(2+).

Belongs to the acireductone dioxygenase (ARD) family. In terms of assembly, monomer. Fe(2+) is required as a cofactor. It depends on Ni(2+) as a cofactor.

It catalyses the reaction 1,2-dihydroxy-5-(methylsulfanyl)pent-1-en-3-one + O2 = 3-(methylsulfanyl)propanoate + CO + formate + 2 H(+). The enzyme catalyses 1,2-dihydroxy-5-(methylsulfanyl)pent-1-en-3-one + O2 = 4-methylsulfanyl-2-oxobutanoate + formate + 2 H(+). It participates in amino-acid biosynthesis; L-methionine biosynthesis via salvage pathway; L-methionine from S-methyl-5-thio-alpha-D-ribose 1-phosphate: step 5/6. In terms of biological role, catalyzes 2 different reactions between oxygen and the acireductone 1,2-dihydroxy-3-keto-5-methylthiopentene (DHK-MTPene) depending upon the metal bound in the active site. Fe-containing acireductone dioxygenase (Fe-ARD) produces formate and 2-keto-4-methylthiobutyrate (KMTB), the alpha-ketoacid precursor of methionine in the methionine recycle pathway. Ni-containing acireductone dioxygenase (Ni-ARD) produces methylthiopropionate, carbon monoxide and formate, and does not lie on the methionine recycle pathway. In Nocardia farcinica (strain IFM 10152), this protein is Acireductone dioxygenase 2.